The following is a 488-amino-acid chain: MCNAEFKGDCMIKKIPMIIGGAERDTSEHEYRELTLNSYKVSIPIINQDDVEAIKSQSVENNLNINQIVNFLYTVGQKWKSENYSRRLTYIRDLVRFLGYSPEMAKLEANWISMILSSKSALYDIVETELGSRHIVDEWLPQGDCYVKAMPKGKSVHLLAGNVPLSGVTSIIRAILTKNECIIKTSSADPFTAIALASSFIDTDEHHPISRSMSVMYWSHNEDIAIPQQIMNCADVVVSWGGYDAIKWATEHTPVNVDILKFGPKKSIAIVDNPVDITASAIGVAHDICFYDQQACFSTQDIYYIGDNIDAFFDELVEQLNLYMDILPKGDQTFDEKASFSLIEKECQFAKYKVEKGDNQSWLLVKSPLGSFGNQPLARSAYIHHVSDISEITPYIENRITQTVTVTPWESSFKYRDVLASHGAERIVESGMNNIFRVGGAHDGMRPLQRLVKYISHERPYTYSTKDVAVKIEQTRYLEEDKFLVFVP.

This sequence belongs to the LuxC family.

The enzyme catalyses a long-chain fatty aldehyde + NADP(+) + CoA = a long-chain fatty acyl-CoA + NADPH + H(+). It functions in the pathway lipid metabolism; fatty acid reduction for biolumincescence. In terms of biological role, luxC is the fatty acid reductase enzyme responsible for synthesis of the aldehyde substrate for the luminescent reaction catalyzed by luciferase. This is Long-chain acyl-protein thioester reductase (luxC) from Photobacterium phosphoreum.